A 308-amino-acid chain; its full sequence is Elongation factor Ts (308 aa).

Residues 80 to 83 (TDFV) are involved in Mg(2+) ion dislocation from EF-Tu.

The protein belongs to the EF-Ts family.

The protein resides in the cytoplasm. In terms of biological role, associates with the EF-Tu.GDP complex and induces the exchange of GDP to GTP. It remains bound to the aminoacyl-tRNA.EF-Tu.GTP complex up to the GTP hydrolysis stage on the ribosome. This is Elongation factor Ts from Rhizobium etli (strain ATCC 51251 / DSM 11541 / JCM 21823 / NBRC 15573 / CFN 42).